A 56-amino-acid polypeptide reads, in one-letter code: Large ribosomal subunit protein bL33C (56 aa).

The protein belongs to the bacterial ribosomal protein bL33 family.

The protein is Large ribosomal subunit protein bL33C of Sorangium cellulosum (strain So ce56) (Polyangium cellulosum (strain So ce56)).